The primary structure comprises 251 residues: Triosephosphate isomerase, glycosomal (251 aa).

Residues N12 and K14 each contribute to the substrate site. The active-site Electrophile is H96. The active-site Proton acceptor is the E168.

Belongs to the triosephosphate isomerase family. Homodimer.

Its subcellular location is the glycosome. The catalysed reaction is D-glyceraldehyde 3-phosphate = dihydroxyacetone phosphate. The protein operates within carbohydrate biosynthesis; gluconeogenesis. Its pathway is carbohydrate degradation; glycolysis; D-glyceraldehyde 3-phosphate from glycerone phosphate: step 1/1. This chain is Triosephosphate isomerase, glycosomal, found in Trypanosoma cruzi.